Reading from the N-terminus, the 221-residue chain is Intraflagellar transport-associated protein (221 aa).

Ser-59 is subject to Phosphoserine.

In terms of assembly, interacts with IFT122; the interaction associates IFTAP with IFT-A complex.

Seems to play a role in ciliary BBSome localization, maybe through interaction with IFT-A complex. This Homo sapiens (Human) protein is Intraflagellar transport-associated protein.